The sequence spans 497 residues: Glutamate--tRNA ligase (497 aa).

A 'HIGH' region motif is present at residues 13–23 (PSPTGDPHVGT). The short motif at 253–257 (KISKR) is the 'KMSKS' region element. Lys-256 lines the ATP pocket.

Belongs to the class-I aminoacyl-tRNA synthetase family. Glutamate--tRNA ligase type 1 subfamily. As to quaternary structure, monomer.

It localises to the cytoplasm. It carries out the reaction tRNA(Glu) + L-glutamate + ATP = L-glutamyl-tRNA(Glu) + AMP + diphosphate. In terms of biological role, catalyzes the attachment of glutamate to tRNA(Glu) in a two-step reaction: glutamate is first activated by ATP to form Glu-AMP and then transferred to the acceptor end of tRNA(Glu). The chain is Glutamate--tRNA ligase from Cutibacterium acnes (strain DSM 16379 / KPA171202) (Propionibacterium acnes).